The sequence spans 122 residues: Large ribosomal subunit protein uL14 (122 aa).

This sequence belongs to the universal ribosomal protein uL14 family. In terms of assembly, part of the 50S ribosomal subunit. Forms a cluster with proteins L3 and L19. In the 70S ribosome, L14 and L19 interact and together make contacts with the 16S rRNA in bridges B5 and B8.

Functionally, binds to 23S rRNA. Forms part of two intersubunit bridges in the 70S ribosome. The polypeptide is Large ribosomal subunit protein uL14 (Maridesulfovibrio salexigens (strain ATCC 14822 / DSM 2638 / NCIMB 8403 / VKM B-1763) (Desulfovibrio salexigens)).